Consider the following 342-residue polypeptide: Glucokinase (342 aa).

G15 to T20 serves as a coordination point for ATP.

Belongs to the bacterial glucokinase family.

The protein localises to the cytoplasm. The catalysed reaction is D-glucose + ATP = D-glucose 6-phosphate + ADP + H(+). This chain is Glucokinase, found in Ralstonia nicotianae (strain ATCC BAA-1114 / GMI1000) (Ralstonia solanacearum).